Consider the following 491-residue polypeptide: Putative F-box/LRR-repeat protein At3g59230 (491 aa).

Residues 11 to 57 (KDIINSLPEALIYHILSFLSTKEAAITSLLSRKWRYFFAFVPNLDFD) enclose the F-box domain. LRR repeat units follow at residues 127–154 (LSIA…RIEA), 156–182 (NGLA…YLDS), 184–209 (ELDY…VMID), 325–351 (ASTV…TIES), 352–377 (NTKV…VFQG), 419–444 (NDKT…NIYY), and 472–491 (VQVI…SSSI).

The protein is Putative F-box/LRR-repeat protein At3g59230 of Arabidopsis thaliana (Mouse-ear cress).